We begin with the raw amino-acid sequence, 237 residues long: MKEHFQLKETIVTIVADDQSYIELAKESIAVHRLKLEEYIRSDPYFKVTLEPYECSSDAPEVVKRLVAAGNSVGIGPMSAVAGTIAALAVGSMVDAGATSAIVDNGGDIAFLNDRPIVIGIYAGQSSIRNIGFTLEPSDHIRGICTSSGTVGPSINFGCADAAVVFSDDVSLADSAATELSNATGIGHEGVENAFDTISSIINIDGAVVIQGEHMGMWGTIPQITRADMQYECITKG.

Belongs to the UPF0280 family.

This chain is UPF0280 protein Mbur_0309, found in Methanococcoides burtonii (strain DSM 6242 / NBRC 107633 / OCM 468 / ACE-M).